The chain runs to 125 residues: uncharacterized protein (125 aa).

An N-terminal signal peptide occupies residues 1–21 (MIRNIIITISAILLLTSKGFA). A coiled-coil region spans residues 54-102 (KPEIREEIQKYRVEIVNINKKKRELYDKLSKEAQNFLAKEQEYKQRLSS). The disordered stretch occupies residues 96-125 (YKQRLSSSSMATEDSKDNNTAKDNKDADKK). The span at 108 to 125 (EDSKDNNTAKDNKDADKK) shows a compositional bias: basic and acidic residues.

This is an uncharacterized protein from Rickettsia bellii (strain RML369-C).